The following is a 359-amino-acid chain: AA9 family lytic polysaccharide monooxygenase B (359 aa).

Residues 1–18 (MQLFTSFSLLAVASFASA) form the signal peptide. H19 and H102 together coordinate Cu(2+). Disulfide bonds link C72-C190 and C113-C117. Residue N150 is glycosylated (N-linked (GlcNAc...) asparagine). Residues H176 and Q185 each coordinate O2. Residue Y187 participates in Cu(2+) binding. The tract at residues 241–310 (GGSPGNSAEP…STNINPTSLK (70 aa)) is disordered. Residues 245 to 254 (GNSAEPQPQH) show a composition bias toward polar residues. The segment covering 255–304 (TSTAVSTAKTASTSSLTTSVTITSQAPSNTANPPQSITTTTTPKPQSTNI) has biased composition (low complexity). A glycan (N-linked (GlcNAc...) asparagine) is linked at N345.

The protein belongs to the polysaccharide monooxygenase AA9 family. Requires Cu(2+) as cofactor.

The protein resides in the secreted. The enzyme catalyses [(1-&gt;4)-beta-D-glucosyl]n+m + reduced acceptor + O2 = 4-dehydro-beta-D-glucosyl-[(1-&gt;4)-beta-D-glucosyl]n-1 + [(1-&gt;4)-beta-D-glucosyl]m + acceptor + H2O.. Its function is as follows. Lytic polysaccharide monooxygenase (LPMO) that depolymerizes crystalline and amorphous polysaccharides via the oxidation of scissile alpha- or beta-(1-4)-glycosidic bonds, yielding C1 and C4 oxidation products. Catalysis by LPMOs requires the reduction of the active-site copper from Cu(II) to Cu(I) by a reducing agent and H(2)O(2) or O(2) as a cosubstrate. Active on cellulose and on xyloglucan for deconstruction of plant biomass. The polypeptide is AA9 family lytic polysaccharide monooxygenase B (Geotrichum candidum (Oospora lactis)).